The chain runs to 119 residues: Large ribosomal subunit protein bL19 (119 aa).

Belongs to the bacterial ribosomal protein bL19 family.

Its function is as follows. This protein is located at the 30S-50S ribosomal subunit interface and may play a role in the structure and function of the aminoacyl-tRNA binding site. The polypeptide is Large ribosomal subunit protein bL19 (Pediococcus pentosaceus (strain ATCC 25745 / CCUG 21536 / LMG 10740 / 183-1w)).